The following is a 690-amino-acid chain: Secreted LysM effector Vd5LysM (690 aa).

Asn4 and Asn69 each carry an N-linked (GlcNAc...) asparagine glycan. LysM domains are found at residues 203 to 248 (TQYT…SLCI), 253 to 301 (DTVT…TLCI), and 341 to 387 (RWYN…SYCV). 6 N-linked (GlcNAc...) asparagine glycosylation sites follow: Asn260, Asn295, Asn375, Asn410, Asn423, and Asn492. Residues 523–546 (PATATTGDGGPTPPAPTHSGQPQD) form a disordered region. Positions 549–596 (TWHVVSSGDSCQSVADDAGISRDQFHDWNPAVGRDCSTNFWLGQAYCV) constitute a LysM 4 domain. Low complexity predominate over residues 606–619 (STVASSTTSSVTPG). Residues 606–636 (STVASSTTSSVTPGPSKPEPPGPTHTGQPSD) are disordered. The 48-residue stretch at 639-686 (EWDVVETGDTCGSLAESNDISLSQFFDWNPAVSRDCVANFWIGQAYCI) folds into the LysM 5 domain.

Belongs to the secreted LysM effector family.

Functionally, might have a role in sequestration of chitin oligosaccharides (breakdown products of fungal cell walls that are released during invasion and act as triggers of host immunity) to dampen host defense. Does not play an important role during host colonization. This Verticillium dahliae (strain VdLs.17 / ATCC MYA-4575 / FGSC 10137) (Verticillium wilt) protein is Secreted LysM effector Vd5LysM.